A 114-amino-acid polypeptide reads, in one-letter code: Small ribosomal subunit protein uS17 (114 aa).

The protein belongs to the universal ribosomal protein uS17 family. As to quaternary structure, part of the 30S ribosomal subunit.

In terms of biological role, one of the primary rRNA binding proteins, it binds specifically to the 5'-end of 16S ribosomal RNA. The polypeptide is Small ribosomal subunit protein uS17 (Saccharolobus solfataricus (strain ATCC 35092 / DSM 1617 / JCM 11322 / P2) (Sulfolobus solfataricus)).